Here is a 256-residue protein sequence, read N- to C-terminus: uncharacterized protein (256 aa).

Residues 187 to 223 adopt a coiled-coil conformation; that stretch reads MEEEEISEVEDALNVLQRLCAQEEGDNKEAETNNNNY.

This is an uncharacterized protein from Ostreid herpesvirus 1 (isolate France) (OsHV-1).